We begin with the raw amino-acid sequence, 146 residues long: Snaclec 4 (146 aa).

The N-terminal stretch at 1–23 is a signal peptide; it reads MGRFISISFGLLVVFLSLSGTEA. 3 cysteine pairs are disulfide-bonded: cysteine 27/cysteine 38, cysteine 55/cysteine 144, and cysteine 121/cysteine 136. Residues 34 to 145 form the C-type lectin domain; sequence YDQNCYKVFT…CNFIAPVVCK (112 aa).

The protein belongs to the snaclec family. Heterodimer; disulfide-linked.

The protein localises to the secreted. Interferes with one step of hemostasis (modulation of platelet aggregation, or coagulation cascade, for example). The protein is Snaclec 4 of Daboia siamensis (Eastern Russel's viper).